The chain runs to 158 residues: Protein GLUTAMINE DUMPER 1 (158 aa).

Residues 1–36 (MRPLSVQSKFEDVATSTSVNHHGVTPQSPWHSPVPY) are Extracellular-facing. Residues 37-57 (LFGGLAAMLGLIAFALLILAC) traverse the membrane as a helical segment. Residues 58–158 (SYWRLSSSGE…DTGETTTTSH (101 aa)) are Cytoplasmic-facing. A disordered region spans residues 65–85 (SGEEDGQNVDEEKESRSGDKA). Acidic residues predominate over residues 66-76 (GEEDGQNVDEE). The short motif at 96 to 100 (VIMAG) is the VIMAG element. Positions 126-158 (ISQEESVAKEEEKMREGEEEKVKDTGETTTTSH) are disordered. Over residues 131–151 (SVAKEEEKMREGEEEKVKDTG) the composition is skewed to basic and acidic residues.

This sequence belongs to the GLUTAMINE DUMPER 1 (TC 9.B.60) family. Interacts with LOG2. Ubiquitinated by LOG2 (in vitro). In terms of tissue distribution, expressed in the vascular tissues and in hydathodes. Expressed in the phloem and xylem (at the protein level).

Its subcellular location is the cell membrane. Probable subunit of an amino acid transporter involved in the regulation of the amino acid metabolism. Stimulates amino acid export by activating nonselective amino acid facilitators. Required the interaction with the RING-type E3 ubiquitin-protein ligase LOG2 to fulfill its function. Plays a role in the Gln export at hydathodes, at xylem parenchyma into xylem sap and from mesophyll into leaf apoplasm. Acts upstream genes involved in the salicylic acid (SA) pathway and in the geminivirus-host interaction. The chain is Protein GLUTAMINE DUMPER 1 (GDU1) from Arabidopsis thaliana (Mouse-ear cress).